A 455-amino-acid chain; its full sequence is SH3 domain-binding protein 5 (455 aa).

Residues 1-12 (MDAALKRSRSEE) are compositionally biased toward basic and acidic residues. Residues 1–63 (MDAALKRSRS…QSTDDINRRE (63 aa)) are disordered. Residues 22–41 (DEEEEEEEGMEQGLEEEEEV) are compositionally biased toward acidic residues. The interval 31 to 265 (MEQGLEEEEE…EIHERRRSSA (235 aa)) is sufficient for interaction with RAB11A and for guanine nucleotide exchange activity. Residues 42-51 (DPRIQGELEK) are compositionally biased toward basic and acidic residues. 4 coiled-coil regions span residues 44-90 (RIQG…LVKK), 97-145 (DSKP…RLLE), 154-200 (AWQE…LEKK), and 211-255 (YFEL…MISD). Disordered stretches follow at residues 259-293 (ERRR…PEPD) and 306-345 (SCSN…VRPG). A compositionally biased stretch (acidic residues) spans 306–317 (SCSNFVSEDDSE). Over residues 320 to 332 (SVSSFSSGPTSPS) the composition is skewed to low complexity. Ser351 carries the post-translational modification Phosphoserine; by MAPK12 and MAPK9. A disordered region spans residues 369 to 435 (SECSGASSPE…ALENRMKQLS (67 aa)). 2 positions are modified to phosphoserine: Ser375 and Ser376. Basic and acidic residues predominate over residues 380–396 (EVERGDRAEGAENKTSD). Residues 403-421 (GLSSSSGSGGSSKSQSSTS) are compositionally biased toward low complexity. Phosphoserine occurs at positions 418 and 421.

This sequence belongs to the SH3BP5 family. Interacts with BTK. Interacts with all isoforms of MAPK8, MAPK9, MAPK10 and MAPK12. Interacts with GDP-bound and nucleotide-free forms of RAB11A. In terms of tissue distribution, highly expressed in testis and ovaries. It is also expressed in a variety of tissues including spleen, lymph node, thymus, bone marrow, fetal liver, colon, small intestine and prostate.

It is found in the cytoplasmic vesicle membrane. The protein resides in the mitochondrion. Functionally, functions as a guanine nucleotide exchange factor (GEF) with specificity for RAB11A and RAB25. Inhibits the auto- and transphosphorylation activity of BTK. Plays a negative regulatory role in BTK-related cytoplasmic signaling in B-cells. May be involved in BCR-induced apoptotic cell death. The sequence is that of SH3 domain-binding protein 5 (SH3BP5) from Homo sapiens (Human).